The chain runs to 220 residues: Ras-related protein Rab-3A (220 aa).

GTP contacts are provided by serine 31, serine 32, valine 33, glycine 34, lysine 35, threonine 36, serine 37, threonine 48, proline 49, serine 53, and threonine 54. Threonine 36 provides a ligand contact to Mg(2+). The Switch 1 motif lies at 49 to 58; sequence PAFVSTVGID. Mg(2+)-binding residues include threonine 54 and aspartate 77. Glycine 80 is a binding site for GTP. The short motif at 80-96 is the Switch 2 element; it reads GQERYRTITTAYYRGAM. Position 86 is a phosphothreonine (threonine 86). GTP contacts are provided by asparagine 135, lysine 136, aspartate 138, alanine 166, and lysine 167. Residues serine 188 and serine 190 each carry the phosphoserine modification. The segment at 194-220 is disordered; that stretch reads ADPAVTGAKQGPQLTDQQAPPHQDCAC. S-geranylgeranyl cysteine attachment occurs at residues cysteine 218 and cysteine 220. The residue at position 220 (cysteine 220) is a Cysteine methyl ester.

The protein belongs to the small GTPase superfamily. Rab family. As to quaternary structure, interacts with RIMS1 and RIMS2. Interacts with Rabphilin-3A/RPH3A and Rab effector Noc2/RPH3AL. Interacts with SYTL4. Interacts with RAB3IP. Interacts with SGSM1 and SGSM3. Interacts with SYT1. Interacts with MYH9; this interaction is essential for lysosome exocytosis and plasma membrane repair. Interacts with STXBP1; this interaction promotes RAB3A dissociation from the vesicle membrane. Interacts with SNCA. Interacts with GDI1, GDI2, CHM and CHML; phosphorylation at Thr-86 disrupts these interactions. Interacts with MADD (via uDENN domain); the GTP-bound form is preferred for interaction. Mg(2+) is required as a cofactor. Phosphorylation of Thr-86 in the switch II region by LRRK2 prevents the association of RAB regulatory proteins, including CHM, CHML and RAB GDP dissociation inhibitors GDI1 and GDI2.

It localises to the cytoplasm. It is found in the cytosol. The protein localises to the lysosome. The protein resides in the cytoplasmic vesicle. Its subcellular location is the secretory vesicle. It localises to the cell projection. It is found in the axon. The protein localises to the cell membrane. The protein resides in the presynapse. Its subcellular location is the postsynapse. It catalyses the reaction GTP + H2O = GDP + phosphate + H(+). Regulated by guanine nucleotide exchange factors (GEFs) including RAB3IL1 and MADD which promote the exchange of bound GDP for free GTP. Regulated by GTPase activating proteins (GAPs) including RAB3GAP1 and TBC1D10B which increase the GTP hydrolysis activity. Inhibited by GDP dissociation inhibitors (GDIs) which prevent Rab-GDP dissociation. Its function is as follows. The small GTPases Rab are key regulators of intracellular membrane trafficking, from the formation of transport vesicles to their fusion with membranes. Rabs cycle between an inactive GDP-bound form and an active GTP-bound form that is able to recruit to membranes different sets of downstream effectors directly responsible for vesicle formation, movement, tethering and fusion. RAB3A plays a central role in regulated exocytosis and secretion. Controls the recruitment, tethering and docking of secretory vesicles to the plasma membrane. Upon stimulation, switches to its active GTP-bound form, cycles to vesicles and recruits effectors such as RIMS1, RIMS2, Rabphilin-3A/RPH3A, RPH3AL or SYTL4 to help the docking of vesicules onto the plasma membrane. Upon GTP hydrolysis by GTPase-activating protein, dissociates from the vesicle membrane allowing the exocytosis to proceed. Stimulates insulin secretion through interaction with RIMS2 or RPH3AL effectors in pancreatic beta cells. Regulates calcium-dependent lysosome exocytosis and plasma membrane repair (PMR) via the interaction with 2 effectors, SYTL4 and myosin-9/MYH9. Acts as a positive regulator of acrosome content secretion in sperm cells by interacting with RIMS1. Also plays a role in the regulation of dopamine release by interacting with synaptotagmin I/SYT. In Sus scrofa (Pig), this protein is Ras-related protein Rab-3A (RAB3A).